Here is a 227-residue protein sequence, read N- to C-terminus: Cytochrome c oxidase subunit 2 (227 aa).

The Mitochondrial intermembrane segment spans residues 1–14; the sequence is MAYPFQLGFQDATS. The chain crosses the membrane as a helical span at residues 15–45; it reads PIMEELLHFHDHTLMIVFLISSLVLYIITLM. Residues 46–59 lie on the Mitochondrial matrix side of the membrane; it reads LTTKLTHTSTMDAQ. Residues 60-87 traverse the membrane as a helical segment; it reads EVETVWTILPAIILILIALPSLRILYMM. Topologically, residues 88–227 are mitochondrial intermembrane; the sequence is DEVNNPSLTV…IFEKWSASML (140 aa). His161, Cys196, Glu198, Cys200, His204, and Met207 together coordinate Cu cation. Glu198 is a binding site for Mg(2+).

The protein belongs to the cytochrome c oxidase subunit 2 family. Component of the cytochrome c oxidase (complex IV, CIV), a multisubunit enzyme composed of 14 subunits. The complex is composed of a catalytic core of 3 subunits MT-CO1, MT-CO2 and MT-CO3, encoded in the mitochondrial DNA, and 11 supernumerary subunits COX4I, COX5A, COX5B, COX6A, COX6B, COX6C, COX7A, COX7B, COX7C, COX8 and NDUFA4, which are encoded in the nuclear genome. The complex exists as a monomer or a dimer and forms supercomplexes (SCs) in the inner mitochondrial membrane with NADH-ubiquinone oxidoreductase (complex I, CI) and ubiquinol-cytochrome c oxidoreductase (cytochrome b-c1 complex, complex III, CIII), resulting in different assemblies (supercomplex SCI(1)III(2)IV(1) and megacomplex MCI(2)III(2)IV(2)). Found in a complex with TMEM177, COA6, COX18, COX20, SCO1 and SCO2. Interacts with TMEM177 in a COX20-dependent manner. Interacts with COX20. Interacts with COX16. The cofactor is Cu cation.

The protein resides in the mitochondrion inner membrane. The enzyme catalyses 4 Fe(II)-[cytochrome c] + O2 + 8 H(+)(in) = 4 Fe(III)-[cytochrome c] + 2 H2O + 4 H(+)(out). Component of the cytochrome c oxidase, the last enzyme in the mitochondrial electron transport chain which drives oxidative phosphorylation. The respiratory chain contains 3 multisubunit complexes succinate dehydrogenase (complex II, CII), ubiquinol-cytochrome c oxidoreductase (cytochrome b-c1 complex, complex III, CIII) and cytochrome c oxidase (complex IV, CIV), that cooperate to transfer electrons derived from NADH and succinate to molecular oxygen, creating an electrochemical gradient over the inner membrane that drives transmembrane transport and the ATP synthase. Cytochrome c oxidase is the component of the respiratory chain that catalyzes the reduction of oxygen to water. Electrons originating from reduced cytochrome c in the intermembrane space (IMS) are transferred via the dinuclear copper A center (CU(A)) of subunit 2 and heme A of subunit 1 to the active site in subunit 1, a binuclear center (BNC) formed by heme A3 and copper B (CU(B)). The BNC reduces molecular oxygen to 2 water molecules using 4 electrons from cytochrome c in the IMS and 4 protons from the mitochondrial matrix. In Balaenoptera borealis (Sei whale), this protein is Cytochrome c oxidase subunit 2 (MT-CO2).